Reading from the N-terminus, the 436-residue chain is Eukaryotic translation initiation factor 4B (436 aa).

The segment at 56 to 98 (AKNNSNNTRSGGFGGSFGGRSRLDPALGGGSSDRREEYPVPDA) is disordered. Ser-65 and Ser-71 each carry phosphoserine. In terms of domain architecture, RRM spans 101-183 (YRAVINNIPW…RTVYVSVAAP (83 aa)). The disordered stretch occupies residues 185-406 (RGGGADVDWS…EKQNGDAKEN (222 aa)). The 1; approximate repeat unit spans residues 190-210 (DVDWSSARGSNFQGDGREDAP). The interval 190–350 (DVDWSSARGS…DWGAARGAQF (161 aa)) is 7 X approximate tandem repeats. A run of 5 repeats spans residues 211–232 (DLDW…REEV), 233–258 (DIDW…REEV), 259–284 (DIDW…REEP), 285–310 (DIDW…REEP), and 311–340 (DIDW…EPAL). The span at 329 to 338 (PRREREKEEP) shows a compositional bias: basic and acidic residues. The stretch at 341 to 350 (DWGAARGAQF) is one 7; truncated repeat. 2 stretches are compositionally biased toward basic and acidic residues: residues 359–376 (TYKD…EQPK) and 397–406 (EKQNGDAKEN).

Functionally, involved in translation initiation. May be the homolog of mammalian eIF4B and be part of an RNA helicase. STM1/TIF3 is a non-essential gene. The protein is Eukaryotic translation initiation factor 4B (TIF3) of Saccharomyces cerevisiae (strain ATCC 204508 / S288c) (Baker's yeast).